The primary structure comprises 148 residues: Transcriptional regulator MraZ (148 aa).

2 SpoVT-AbrB domains span residues Val-5 to Glu-51 and Ala-80 to Arg-123.

The protein belongs to the MraZ family. Forms oligomers.

The protein resides in the cytoplasm. Its subcellular location is the nucleoid. The chain is Transcriptional regulator MraZ from Thiobacillus denitrificans (strain ATCC 25259 / T1).